We begin with the raw amino-acid sequence, 2014 residues long: AP-1 accessory protein LAA1 (2014 aa).

Interacts with the clathrin-associated adapter complex AP-1. Interacts directly with LAA2.

The protein localises to the golgi apparatus. Its subcellular location is the cytoplasmic vesicle. It localises to the clathrin-coated vesicle. Its function is as follows. Involved in localization of clathrin adapter protein complex-1 (AP-1) and subsequent AP-1-mediated clathrin-coated vesicle cargo loading. In complex with LAA2, cooperates with the small GTPase ARF1 and the phosphatidyl-inositol-4-phosphate (PI4P) synthesis to confer temporal specificity to AP-1 recruitment. This chain is AP-1 accessory protein LAA1, found in Saccharomyces cerevisiae (strain ATCC 204508 / S288c) (Baker's yeast).